The chain runs to 118 residues: Na(+)/H(+) antiporter subunit G1 (118 aa).

3 helical membrane-spanning segments follow: residues 4–24 (IILI…SALA), 38–58 (AHAA…GTFL), and 60–80 (FIAT…FVLI).

It belongs to the CPA3 antiporters (TC 2.A.63) subunit G family. As to quaternary structure, may form a heterooligomeric complex that consists of seven subunits: mnhA1, mnhB1, mnhC1, mnhD1, mnhE1, mnhF1 and mnhG1.

It localises to the cell membrane. Its function is as follows. Mnh complex is a Na(+)/H(+) antiporter involved in Na(+) excretion. This Staphylococcus aureus (strain Mu3 / ATCC 700698) protein is Na(+)/H(+) antiporter subunit G1 (mnhG1).